Consider the following 126-residue polypeptide: Small ribosomal subunit protein uS13c (126 aa).

Positions 97 to 126 (PLRGQRTRTNARTRRGGKKTVAGKKKAPRK) are disordered. Over residues 101–126 (QRTRTNARTRRGGKKTVAGKKKAPRK) the composition is skewed to basic residues.

It belongs to the universal ribosomal protein uS13 family. As to quaternary structure, part of the 30S ribosomal subunit.

The protein localises to the plastid. It localises to the chloroplast. Located at the top of the head of the 30S subunit, it contacts several helices of the 16S rRNA. In Porphyra purpurea (Red seaweed), this protein is Small ribosomal subunit protein uS13c.